The primary structure comprises 464 residues: Argininosuccinate lyase (464 aa).

It belongs to the lyase 1 family. Argininosuccinate lyase subfamily.

It localises to the cytoplasm. It carries out the reaction 2-(N(omega)-L-arginino)succinate = fumarate + L-arginine. The protein operates within amino-acid biosynthesis; L-arginine biosynthesis; L-arginine from L-ornithine and carbamoyl phosphate: step 3/3. The protein is Argininosuccinate lyase of Pseudomonas fluorescens (strain SBW25).